The following is a 702-amino-acid chain: MARKIPLHRVRNIGIAAHIDAGKTTTTERILFYTGVSHKIGEVHEGAATMDWMEQEQERGITITSAATTCHWNHPKTNEQLQVNIIDTPGHVDFTIEVERSMRVLDGAVAVFCSVGGVQPQSETVWRQANKYGVPRIIYVNKMDRTGANFFNVEAQVRDRLKANPVPIQVPIGAEENFRGMVDLIKMKAYTYNLDAQAGEMYKIEDIPADLEDVVAEYREKLIEAAAESSEELMEKYLEGTELTEDEIVAGLKKRCLAMEITPMVCGTSFKNKGVQPLLDAVAMYLPAPTEVADIKGETQDGDAIIVPSTDKGEVAALAFKIMTDPFVGQLTFTRVYRGVLESGTYVLNSTKMKKERIGRLLKMHANSREEIKELYAGEIGAVVGLKDTITGDTLASEKDPVILERMDFPDPVISVAVEPKTKADQEKMGIALGKLAEEDPSFRVNTDEESGQTIISGMGELHLEILVDRMKREFKVEAEVGAPQVAYRETIRNAVKQEYKYAKQSGGKGQYGHVYLEIKPLPSGSEPNFKFNNEIKGGVVPKEYIPAVEKGCAEAMLGGILAGYPMVDIEVTLYDGSYHDVDSSEMAFKLAASMGFKQGCRSAAAGAVILEPIMKVEIETPEDYMGDVIGDCNKRRGQVQSMDDRAGIKLVTAMIPLSEMFGYSTDLRSMSQGRATYSMIFDAYQEVPRNVSEEIMKKRNG.

The tr-type G domain maps to 8–290 (HRVRNIGIAA…AVAMYLPAPT (283 aa)). Residues 17–24 (AHIDAGKT), 87–91 (DTPGH), and 141–144 (NKMD) contribute to the GTP site.

The protein belongs to the TRAFAC class translation factor GTPase superfamily. Classic translation factor GTPase family. EF-G/EF-2 subfamily.

It is found in the cytoplasm. Its function is as follows. Catalyzes the GTP-dependent ribosomal translocation step during translation elongation. During this step, the ribosome changes from the pre-translocational (PRE) to the post-translocational (POST) state as the newly formed A-site-bound peptidyl-tRNA and P-site-bound deacylated tRNA move to the P and E sites, respectively. Catalyzes the coordinated movement of the two tRNA molecules, the mRNA and conformational changes in the ribosome. The chain is Elongation factor G from Aliarcobacter butzleri (strain RM4018) (Arcobacter butzleri).